Reading from the N-terminus, the 880-residue chain is Interference hedgehog (880 aa).

A signal peptide spans 1–20; the sequence is MPSIVSSLLLVVLLTSPLGA. Residues 21-703 are Extracellular-facing; that stretch reads IPVLYPSPPP…SHNETFSMSP (683 aa). 4 Ig-like C2-type domains span residues 37-142, 154-235, 251-339, and 345-432; these read PGVR…TARL, PVTS…STSS, PYLL…FIQV, and PQIV…LQVT. 4 disulfide bridges follow: Cys-60–Cys-126, Cys-172–Cys-219, Cys-275–Cys-323, and Cys-366–Cys-414. Residues Asn-79, Asn-102, and Asn-208 are each glycosylated (N-linked (GlcNAc...) asparagine). The disordered stretch occupies residues 435-468; that stretch reads PIHSESTQQSDHNHSKANRGRRPAQMIPPSAPNV. N-linked (GlcNAc...) asparagine glycans are attached at residues Asn-447 and Asn-467. 2 consecutive Fibronectin type-III domains span residues 462–570 and 578–673; these read PPSA…LQPG and VPEM…TQRP. Heparin contacts are provided by Arg-498, Lys-504, Lys-506, and Arg-544. Residue Asn-560 is glycosylated (N-linked (GlcNAc...) asparagine). The disordered stretch occupies residues 665–699; the sequence is LKQGRTQRPMVSTTEEATLQTGVRDTTTPSHNETF. Positions 668–699 are enriched in polar residues; sequence GRTQRPMVSTTEEATLQTGVRDTTTPSHNETF. A glycan (N-linked (GlcNAc...) asparagine) is linked at Asn-696. The helical transmembrane segment at 704-724 threads the bilayer; that stretch reads IVTGTIGGGAVLILFVVTTCL. Residues 725 to 880 are Cytoplasmic-facing; sequence CMWRRRNSRA…SSGSLNSVGV (156 aa). Residues 797–880 form a disordered region; the sequence is YFQRQPTYDY…SSGSLNSVGV (84 aa). 2 stretches are compositionally biased toward low complexity: residues 827 to 839 and 864 to 880; these read RAGS…NNLN and SSRS…SVGV.

It belongs to the immunoglobulin superfamily. IHOG family. As to quaternary structure, homodimer. Heterotetramer; 2 iHog chains bind 2 hh chains when facilitated by heparin, heparin is required to promote high-affinity interactions between hh and iHog.

The protein localises to the membrane. Mediates response to the active Hedgehog (Hh) protein signal in embryos, functioning upstream or at the level of patched (ptc). The polypeptide is Interference hedgehog (Drosophila ananassae (Fruit fly)).